Consider the following 188-residue polypeptide: Putative manganese efflux pump MntP (188 aa).

The next 6 membrane-spanning stretches (helical) occupy residues 3–23 (ISAT…ASIG), 41–61 (LIFG…GMLA), 62–82 (SQFI…FLGG), 106–128 (WILV…GLAF), 143–163 (ATLI…PLLG), and 168–188 (ILGG…HFAG).

Belongs to the MntP (TC 9.B.29) family.

It is found in the cell inner membrane. Probably functions as a manganese efflux pump. The polypeptide is Putative manganese efflux pump MntP (Enterobacter sp. (strain 638)).